The chain runs to 429 residues: Glutamate-1-semialdehyde 2,1-aminomutase 2 (429 aa).

K268 carries the N6-(pyridoxal phosphate)lysine modification.

This sequence belongs to the class-III pyridoxal-phosphate-dependent aminotransferase family. HemL subfamily. As to quaternary structure, homodimer. Pyridoxal 5'-phosphate is required as a cofactor.

Its subcellular location is the cytoplasm. The catalysed reaction is (S)-4-amino-5-oxopentanoate = 5-aminolevulinate. Its pathway is porphyrin-containing compound metabolism; protoporphyrin-IX biosynthesis; 5-aminolevulinate from L-glutamyl-tRNA(Glu): step 2/2. This is Glutamate-1-semialdehyde 2,1-aminomutase 2 from Bacillus cereus (strain ATCC 10987 / NRS 248).